Here is a 238-residue protein sequence, read N- to C-terminus: Proteasome subunit beta type-6 (238 aa).

A2 carries the post-translational modification N-acetylalanine. Residues 2–33 (AAALAVRGAVSAPAFGPEALTPDWENREVSTG) constitute a propeptide, removed in mature form. Catalysis depends on T34, which acts as the Nucleophile. Residue T68 is modified to Phosphothreonine.

It belongs to the peptidase T1B family. The 26S proteasome consists of a 20S proteasome core and two 19S regulatory subunits. The 20S proteasome core is a barrel-shaped complex made of 28 subunits that are arranged in four stacked rings. The two outer rings are each formed by seven alpha subunits, and the two inner rings are formed by seven beta subunits. The proteolytic activity is exerted by three beta-subunits PSMB5, PSMB6 and PSMB7.

It localises to the cytoplasm. The protein localises to the nucleus. It catalyses the reaction Cleavage of peptide bonds with very broad specificity.. In terms of biological role, component of the 20S core proteasome complex involved in the proteolytic degradation of most intracellular proteins. This complex plays numerous essential roles within the cell by associating with different regulatory particles. Associated with two 19S regulatory particles, forms the 26S proteasome and thus participates in the ATP-dependent degradation of ubiquitinated proteins. The 26S proteasome plays a key role in the maintenance of protein homeostasis by removing misfolded or damaged proteins that could impair cellular functions, and by removing proteins whose functions are no longer required. Associated with the PA200 or PA28, the 20S proteasome mediates ubiquitin-independent protein degradation. This type of proteolysis is required in several pathways including spermatogenesis (20S-PA200 complex) or generation of a subset of MHC class I-presented antigenic peptides (20S-PA28 complex). Within the 20S core complex, PSMB6 displays a peptidylglutamyl-hydrolyzing activity also termed postacidic or caspase-like activity, meaning that the peptides bond hydrolysis occurs directly after acidic residues. The chain is Proteasome subunit beta type-6 (Psmb6) from Rattus norvegicus (Rat).